A 726-amino-acid polypeptide reads, in one-letter code: Catalase-peroxidase (726 aa).

The segment at residues 90–213 is a cross-link (tryptophyl-tyrosyl-methioninium (Trp-Tyr) (with M-239)); the sequence is WHAAGTYRIG…LAAVQMGLIY (124 aa). Histidine 91 functions as the Proton acceptor in the catalytic mechanism. Residues 213 to 239 constitute a cross-link (tryptophyl-tyrosyl-methioninium (Tyr-Met) (with W-90)); sequence YVNPEGPNGNPDPLAAARDIRETFARM. Residue histidine 254 participates in heme b binding. The tract at residues 334–359 is disordered; it reads AHQWKPKHGAGANTVPDAHDPSKRHA.

The protein belongs to the peroxidase family. Peroxidase/catalase subfamily. Homodimer or homotetramer. Requires heme b as cofactor. Formation of the three residue Trp-Tyr-Met cross-link is important for the catalase, but not the peroxidase activity of the enzyme.

It catalyses the reaction H2O2 + AH2 = A + 2 H2O. It carries out the reaction 2 H2O2 = O2 + 2 H2O. Bifunctional enzyme with both catalase and broad-spectrum peroxidase activity. The sequence is that of Catalase-peroxidase from Bradyrhizobium sp. (strain BTAi1 / ATCC BAA-1182).